A 1791-amino-acid polypeptide reads, in one-letter code: Protein TIC 214 (1791 aa).

The next 6 membrane-spanning stretches (helical) occupy residues 19–39 (IINSVVVVGLYYGFLTTFSIG), 68–88 (FIAGQLMMFISIYYAPLHLAL), 91–111 (PHTITVLALPYLLFHFFWNNH), 133–153 (VFLNNLIFQLFNHFILPSSML), 176–196 (VGWLIGHILFMKWVGLVLVWI), and 230–250 (IFSILLFITCVYYLGRIPSPI). Residues 257-271 (GTSETEERGGTKQDQ) are compositionally biased toward basic and acidic residues. Disordered stretches follow at residues 257–278 (GTSETEERGGTKQDQEVSTEEA) and 1498–1521 (ADQGELESDNEKQRNPELALPNQE).

Belongs to the TIC214 family. In terms of assembly, part of the Tic complex.

The protein resides in the plastid. The protein localises to the chloroplast inner membrane. Functionally, involved in protein precursor import into chloroplasts. May be part of an intermediate translocation complex acting as a protein-conducting channel at the inner envelope. The polypeptide is Protein TIC 214 (Aethionema grandiflorum (Persian stone-cress)).